The following is a 198-amino-acid chain: Protein C4 (198 aa).

A disordered region spans residues 1–36 (MFNPRHPGGEFFGRKHHRRHAPDGRSSSSSSSSSEC).

In Giardia intestinalis (Giardia lamblia), this protein is Protein C4 (C4).